Here is a 41-residue protein sequence, read N- to C-terminus: Large ribosomal subunit protein bL36 (41 aa).

The protein belongs to the bacterial ribosomal protein bL36 family.

The sequence is that of Large ribosomal subunit protein bL36 from Caulobacter vibrioides (strain ATCC 19089 / CIP 103742 / CB 15) (Caulobacter crescentus).